Consider the following 204-residue polypeptide: High frequency lysogenization protein HflD homolog (204 aa).

The protein belongs to the HflD family.

It is found in the cytoplasm. The protein resides in the cell inner membrane. This chain is High frequency lysogenization protein HflD homolog, found in Shewanella amazonensis (strain ATCC BAA-1098 / SB2B).